We begin with the raw amino-acid sequence, 92 residues long: Small ribosomal subunit protein bS20 (92 aa).

Residues 1–23 (MANTTSAKKATRKIARRTDVNKA) are disordered.

It belongs to the bacterial ribosomal protein bS20 family.

Functionally, binds directly to 16S ribosomal RNA. The sequence is that of Small ribosomal subunit protein bS20 from Rhizobium etli (strain CIAT 652).